Reading from the N-terminus, the 353-residue chain is MTIALGRFTKDEKDLFDIMDDWLRRDRFVFVGWSGLLLFPCAYFALGGWFTGTTFVTSWYTHGLASSYLEGCNFLTAAVSTPANSLAHSLLLLWGPEAQGDFTRWCQLGGLWTFVALHGAFGLIGFMLRQFELARSVQLRPYNAIAFSGPIAVFVSVFLIYPLGQSGWFFAPSFGVAAIFRFILFFQGFHNWTLNPFHMMGVAGVLGAALLCAIHGATVENTLFEDGDGANTFRAFNPTQAEETYSMVTANRFWSQIFGVAFSNKRWLHFFMLFVPVTGLWMSALGVVGLALNLRAYDFVSQEIRAAEDPEFETFYTKNILLNEGIRAWMAAQDQPHENLIFPEEVLPRGNAL.

Thr2 carries the post-translational modification N-acetylthreonine. A Phosphothreonine modification is found at Thr2. A helical membrane pass occupies residues 41 to 61 (CAYFALGGWFTGTTFVTSWYT). His118 contributes to the chlorophyll a binding site. Residues 125-141 (GFMLRQFELARSVQLRP) form a helical membrane-spanning segment. Pheophytin a-binding residues include Gln130 and Asn143. The chain crosses the membrane as a helical span at residues 153–166 (VFVSVFLIYPLGQS). His198 serves as a coordination point for chlorophyll a. Residues 208 to 228 (AALLCAIHGATVENTLFEDGD) traverse the membrane as a helical segment. 2 residues coordinate a plastoquinone: His215 and Phe262. His215 contributes to the Fe cation binding site. His269 is a Fe cation binding site. A helical membrane pass occupies residues 279-295 (GLWMSALGVVGLALNLR).

It belongs to the reaction center PufL/M/PsbA/D family. As to quaternary structure, PSII is composed of 1 copy each of membrane proteins PsbA, PsbB, PsbC, PsbD, PsbE, PsbF, PsbH, PsbI, PsbJ, PsbK, PsbL, PsbM, PsbT, PsbX, PsbY, PsbZ, Psb30/Ycf12, at least 3 peripheral proteins of the oxygen-evolving complex and a large number of cofactors. It forms dimeric complexes. The cofactor is The D1/D2 heterodimer binds P680, chlorophylls that are the primary electron donor of PSII, and subsequent electron acceptors. It shares a non-heme iron and each subunit binds pheophytin, quinone, additional chlorophylls, carotenoids and lipids. There is also a Cl(-1) ion associated with D1 and D2, which is required for oxygen evolution. The PSII complex binds additional chlorophylls, carotenoids and specific lipids..

It is found in the plastid. The protein resides in the chloroplast thylakoid membrane. It catalyses the reaction 2 a plastoquinone + 4 hnu + 2 H2O = 2 a plastoquinol + O2. Photosystem II (PSII) is a light-driven water:plastoquinone oxidoreductase that uses light energy to abstract electrons from H(2)O, generating O(2) and a proton gradient subsequently used for ATP formation. It consists of a core antenna complex that captures photons, and an electron transfer chain that converts photonic excitation into a charge separation. The D1/D2 (PsbA/PsbD) reaction center heterodimer binds P680, the primary electron donor of PSII as well as several subsequent electron acceptors. D2 is needed for assembly of a stable PSII complex. In Nandina domestica (Heavenly bamboo), this protein is Photosystem II D2 protein.